Here is a 61-residue protein sequence, read N- to C-terminus: Short neurotoxin 2 (61 aa).

Cystine bridges form between cysteine 3-cysteine 23, cysteine 17-cysteine 40, cysteine 42-cysteine 53, and cysteine 54-cysteine 59.

This sequence belongs to the three-finger toxin family. Short-chain subfamily. Type I alpha-neurotoxin sub-subfamily. In terms of tissue distribution, expressed by the venom gland.

The protein resides in the secreted. Its function is as follows. Binds to muscle nicotinic acetylcholine receptor (nAChR) and inhibit acetylcholine from binding to the receptor, thereby impairing neuromuscular transmission. The chain is Short neurotoxin 2 from Naja annulifera (Banded Egyptian cobra).